Reading from the N-terminus, the 413-residue chain is Mitochondrial inner membrane magnesium transporter MFM1 (413 aa).

The N-terminal 35 residues, 1–35 (MRAFPRVLPFRHQRSYNNILLRTVRLFGSSLSSFD), are a transit peptide targeting the mitochondrion. Asn202 carries N-linked (GlcNAc...) asparagine glycosylation. The chain crosses the membrane as a helical span at residues 329–349 (LMLLGIRYAIGMLSLGGALFL). The YGMN motif lies at 353-356 (YGMN). A helical membrane pass occupies residues 367–387 (AYLTVTILGLISTVWLYAKGI).

This sequence belongs to the CorA metal ion transporter (MIT) (TC 1.A.35) family. Forms homooligomers. Interacts with MRS2. N-glycosylated. Glycosylation is important for correct localization of the protein.

It localises to the mitochondrion inner membrane. Functionally, mitochondrial inner membrane magnesium transporter required for mitochondrial magnesium homeostasis. Modulates the conductance of the MRS2 channel. Involved in the splicing of mRNA group II introns in mitochondria by affecting mitochondrial magnesium concentrations, which are critical for group II intron splicing. This is Mitochondrial inner membrane magnesium transporter MFM1 (MFM1) from Saccharomyces cerevisiae (strain ATCC 204508 / S288c) (Baker's yeast).